The chain runs to 348 residues: Dihydroorotase (348 aa).

Residues histidine 17 and histidine 19 each coordinate Zn(2+). Residues 19–21 (HLR) and asparagine 45 contribute to the substrate site. Residues lysine 103, histidine 140, and histidine 178 each coordinate Zn(2+). Lysine 103 bears the N6-carboxylysine mark. Position 140 (histidine 140) interacts with substrate. Leucine 223 contributes to the substrate binding site. Aspartate 251 contributes to the Zn(2+) binding site. Aspartate 251 is an active-site residue. Histidine 255 and alanine 267 together coordinate substrate.

It belongs to the metallo-dependent hydrolases superfamily. DHOase family. Class II DHOase subfamily. As to quaternary structure, homodimer. Zn(2+) serves as cofactor.

The enzyme catalyses (S)-dihydroorotate + H2O = N-carbamoyl-L-aspartate + H(+). It functions in the pathway pyrimidine metabolism; UMP biosynthesis via de novo pathway; (S)-dihydroorotate from bicarbonate: step 3/3. Its function is as follows. Catalyzes the reversible cyclization of carbamoyl aspartate to dihydroorotate. In Escherichia coli O17:K52:H18 (strain UMN026 / ExPEC), this protein is Dihydroorotase.